A 122-amino-acid chain; its full sequence is Large ribosomal subunit protein bL12 (122 aa).

Belongs to the bacterial ribosomal protein bL12 family. As to quaternary structure, homodimer. Part of the ribosomal stalk of the 50S ribosomal subunit. Forms a multimeric L10(L12)X complex, where L10 forms an elongated spine to which 2 to 4 L12 dimers bind in a sequential fashion. Binds GTP-bound translation factors.

Functionally, forms part of the ribosomal stalk which helps the ribosome interact with GTP-bound translation factors. Is thus essential for accurate translation. The polypeptide is Large ribosomal subunit protein bL12 (Sodalis glossinidius (strain morsitans)).